Reading from the N-terminus, the 362-residue chain is Phosphoserine aminotransferase (362 aa).

L-glutamate is bound by residues Ser-9 and Arg-42. Pyridoxal 5'-phosphate-binding positions include 76–77 (GR), Trp-102, Thr-153, Asp-174, and Gln-197. Lys-198 is subject to N6-(pyridoxal phosphate)lysine. 239–240 (NT) provides a ligand contact to pyridoxal 5'-phosphate.

Belongs to the class-V pyridoxal-phosphate-dependent aminotransferase family. SerC subfamily. As to quaternary structure, homodimer. Pyridoxal 5'-phosphate serves as cofactor.

The protein localises to the cytoplasm. It catalyses the reaction O-phospho-L-serine + 2-oxoglutarate = 3-phosphooxypyruvate + L-glutamate. It carries out the reaction 4-(phosphooxy)-L-threonine + 2-oxoglutarate = (R)-3-hydroxy-2-oxo-4-phosphooxybutanoate + L-glutamate. The protein operates within amino-acid biosynthesis; L-serine biosynthesis; L-serine from 3-phospho-D-glycerate: step 2/3. It participates in cofactor biosynthesis; pyridoxine 5'-phosphate biosynthesis; pyridoxine 5'-phosphate from D-erythrose 4-phosphate: step 3/5. In terms of biological role, catalyzes the reversible conversion of 3-phosphohydroxypyruvate to phosphoserine and of 3-hydroxy-2-oxo-4-phosphonooxybutanoate to phosphohydroxythreonine. The chain is Phosphoserine aminotransferase from Shigella boydii serotype 4 (strain Sb227).